Here is a 320-residue protein sequence, read N- to C-terminus: tRNA pseudouridine synthase B (320 aa).

The active-site Nucleophile is aspartate 49.

Belongs to the pseudouridine synthase TruB family. Type 1 subfamily.

It catalyses the reaction uridine(55) in tRNA = pseudouridine(55) in tRNA. Its function is as follows. Responsible for synthesis of pseudouridine from uracil-55 in the psi GC loop of transfer RNAs. This is tRNA pseudouridine synthase B from Bartonella bacilliformis (strain ATCC 35685 / KC583 / Herrer 020/F12,63).